Consider the following 531-residue polypeptide: Coiled-coil domain-containing protein 9 (531 aa).

Residues 40–531 form a disordered region; sequence EDRKKAELEG…PGEAWPFESV (492 aa). Residues 59 to 72 are compositionally biased toward basic and acidic residues; that stretch reads RSVEKENVAVESEK. The residue at position 80 (Ser80) is a Phosphoserine. Phosphothreonine is present on Thr95. Arg107 carries the omega-N-methylarginine modification. Residue Ser111 is modified to Phosphoserine. 3 positions are modified to omega-N-methylarginine: Arg121, Arg128, and Arg130. Asymmetric dimethylarginine is present on residues Arg131, Arg133, and Arg135. Ser137 is subject to Phosphoserine. Basic and acidic residues-rich tracts occupy residues 148–185, 194–217, and 227–241; these read ISDR…REGV, FLDD…EESR, and DFER…ERQG. Residues 149–185 are a coiled coil; it reads SDRKSKEWEERRRQNIEKMNEEMEKIAEYERNQREGV. A Phosphoserine modification is found at Ser202. Phosphoserine occurs at positions 248 and 255. 4 stretches are compositionally biased toward basic and acidic residues: residues 258–279, 289–302, 311–320, and 361–372; these read GRER…QERL, WRRE…DGMF, EPSHRYDDQA, and YSDHDDRWETKE. Residues Ser376, Ser386, and Ser390 each carry the phosphoserine modification. Residues 386-395 are compositionally biased toward low complexity; that stretch reads SPETSPKETP. Over residues 396-406 the composition is skewed to pro residues; it reads MQPPEIPAPAH. The span at 411–446 shows a compositional bias: acidic residues; that stretch reads DEGEENEGEEDEEWEDISEDEEEEEIEVEEGDEEEP. At Ser521 the chain carries Phosphoserine.

As to quaternary structure, probable component of the exon junction complex (EJC); the association is RNA-dependent.

Its function is as follows. Probable component of the exon junction complex (EJC), a multiprotein complex that associates immediately upstream of the exon-exon junction on mRNAs and serves as a positional landmark for the intron exon structure of genes and directs post-transcriptional processes in the cytoplasm such as mRNA export, nonsense-mediated mRNA decay (NMD) or translation. This Homo sapiens (Human) protein is Coiled-coil domain-containing protein 9.